A 242-amino-acid chain; its full sequence is MYQKSLLFSLLASSALAAQFPIPDSKGSVTFDEPYEIAAGETYDGGYKTYGRGVSCTGQSEGGQDDTVFIVQEGGTLKNAIIGSDQIEGVYCLGACTIENVWWEAVCEDALSLKGGSGPYNIIGGGAQGADDKVIQHNSGGQVNIDGFTVYDFGKLYRSCGNCDEQYARTVTIKNVVANSGKTLVGINSNLGDTASIDSSTCATDVKKICVEYKGNDTGAEPEEISEGPSDACQYSEPLSSC.

A signal peptide spans 1 to 17; that stretch reads MYQKSLLFSLLASSALA. N-linked (GlcNAc...) asparagine glycosylation occurs at N216. A disordered region spans residues 217-242; that stretch reads DTGAEPEEISEGPSDACQYSEPLSSC.

This sequence belongs to the polysaccharide lyase 3 family. It depends on Ca(2+) as a cofactor.

Its subcellular location is the secreted. It carries out the reaction Eliminative cleavage of (1-&gt;4)-alpha-D-galacturonan to give oligosaccharides with 4-deoxy-alpha-D-galact-4-enuronosyl groups at their non-reducing ends.. In terms of biological role, pectinolytic enzyme consist of four classes of enzymes: pectin lyase, polygalacturonase, pectin methylesterase and rhamnogalacturonase. Among pectinolytic enzymes, pectin lyase is the most important in depolymerization of pectin, since it cleaves internal glycosidic bonds of highly methylated pectins. Favors pectate, the anion, over pectin, the methyl ester. In Aspergillus fumigatus (strain CBS 144.89 / FGSC A1163 / CEA10) (Neosartorya fumigata), this protein is Probable pectate lyase D (plyD).